Here is a 94-residue protein sequence, read N- to C-terminus: Co-chaperonin GroES (94 aa).

It belongs to the GroES chaperonin family. In terms of assembly, heptamer of 7 subunits arranged in a ring. Interacts with the chaperonin GroEL.

Its subcellular location is the cytoplasm. Functionally, together with the chaperonin GroEL, plays an essential role in assisting protein folding. The GroEL-GroES system forms a nano-cage that allows encapsulation of the non-native substrate proteins and provides a physical environment optimized to promote and accelerate protein folding. GroES binds to the apical surface of the GroEL ring, thereby capping the opening of the GroEL channel. The protein is Co-chaperonin GroES of Caldanaerobacter subterraneus subsp. tengcongensis (strain DSM 15242 / JCM 11007 / NBRC 100824 / MB4) (Thermoanaerobacter tengcongensis).